The primary structure comprises 349 residues: Cobalt-precorrin-5B C(1)-methyltransferase (349 aa).

This sequence belongs to the CbiD family.

The enzyme catalyses Co-precorrin-5B + S-adenosyl-L-methionine = Co-precorrin-6A + S-adenosyl-L-homocysteine. Its pathway is cofactor biosynthesis; adenosylcobalamin biosynthesis; cob(II)yrinate a,c-diamide from sirohydrochlorin (anaerobic route): step 6/10. In terms of biological role, catalyzes the methylation of C-1 in cobalt-precorrin-5B to form cobalt-precorrin-6A. The protein is Cobalt-precorrin-5B C(1)-methyltransferase of Saccharolobus solfataricus (strain ATCC 35092 / DSM 1617 / JCM 11322 / P2) (Sulfolobus solfataricus).